Consider the following 255-residue polypeptide: Malonyl-[acyl-carrier protein] O-methyltransferase (255 aa).

This sequence belongs to the methyltransferase superfamily.

It catalyses the reaction malonyl-[ACP] + S-adenosyl-L-methionine = malonyl-[ACP] methyl ester + S-adenosyl-L-homocysteine. It participates in cofactor biosynthesis; biotin biosynthesis. Converts the free carboxyl group of a malonyl-thioester to its methyl ester by transfer of a methyl group from S-adenosyl-L-methionine (SAM). It allows to synthesize pimeloyl-ACP via the fatty acid synthetic pathway. The protein is Malonyl-[acyl-carrier protein] O-methyltransferase of Acinetobacter baylyi (strain ATCC 33305 / BD413 / ADP1).